A 158-amino-acid polypeptide reads, in one-letter code: Ribosome maturation factor RimP (158 aa).

It belongs to the RimP family.

Its subcellular location is the cytoplasm. Functionally, required for maturation of 30S ribosomal subunits. This chain is Ribosome maturation factor RimP, found in Deinococcus radiodurans (strain ATCC 13939 / DSM 20539 / JCM 16871 / CCUG 27074 / LMG 4051 / NBRC 15346 / NCIMB 9279 / VKM B-1422 / R1).